The chain runs to 256 residues: UPF0246 protein HCH_04801 (256 aa).

It belongs to the UPF0246 family.

The polypeptide is UPF0246 protein HCH_04801 (Hahella chejuensis (strain KCTC 2396)).